We begin with the raw amino-acid sequence, 884 residues long: Probable ribonuclease ZC3H12C (884 aa).

The disordered stretch occupies residues 66 to 108 (KPTMDTVNSGKEGKGVSEENVSSGDSEGSTSSDHESEQLSSLS). Residues 87–96 (SSGDSEGSTS) show a composition bias toward low complexity. Position 231 is a phosphoserine (Ser231). The region spanning 246 to 401 (LRPVVIDGSN…LGRHGPSLDN (156 aa)) is the RNase NYN domain. A C3H1-type zinc finger spans residues 411–436 (EHKKQPCPYGKKCTYGHKCKYYHPER). A compositionally biased stretch (polar residues) spans 456 to 478 (AAKTTNEGGLVKSNSVPCSTKAD). Disordered regions lie at residues 456–548 (AAKT…SGVH), 716–739 (VGARSSCPGDYPSPPSSAHSKAPH), and 755–776 (SRLYDSSPSRQRKPYSRQEGLG). Residues 500 to 516 (VYQDIEEKLPTKNKLET) are compositionally biased toward basic and acidic residues. A compositionally biased stretch (polar residues) spans 518–543 (SVPSLVSIPATSTAKPQSTTPLSNGL).

Belongs to the ZC3H12 family. Mg(2+) is required as a cofactor.

May function as RNase and regulate the levels of target RNA species. This chain is Probable ribonuclease ZC3H12C (Zc3h12c), found in Mus musculus (Mouse).